The primary structure comprises 411 residues: S-adenosylmethionine synthase (411 aa).

H15 provides a ligand contact to ATP. Residue D17 participates in Mg(2+) binding. E43 is a K(+) binding site. L-methionine-binding residues include E56 and Q99. The flexible loop stretch occupies residues 99-109; that stretch reads QSPDIAQGVDT. Residues 174–176, 247–248, D256, 262–263, A279, and K283 contribute to the ATP site; these read DGK, RF, and RK. D256 contacts L-methionine. L-methionine is bound at residue K287.

The protein belongs to the AdoMet synthase family. In terms of assembly, homotetramer; dimer of dimers. The cofactor is Mg(2+). K(+) is required as a cofactor.

It localises to the cytoplasm. It catalyses the reaction L-methionine + ATP + H2O = S-adenosyl-L-methionine + phosphate + diphosphate. Its pathway is amino-acid biosynthesis; S-adenosyl-L-methionine biosynthesis; S-adenosyl-L-methionine from L-methionine: step 1/1. Functionally, catalyzes the formation of S-adenosylmethionine (AdoMet) from methionine and ATP. The overall synthetic reaction is composed of two sequential steps, AdoMet formation and the subsequent tripolyphosphate hydrolysis which occurs prior to release of AdoMet from the enzyme. This Streptomyces spectabilis protein is S-adenosylmethionine synthase.